A 154-amino-acid chain; its full sequence is Ribosomal RNA large subunit methyltransferase H (154 aa).

S-adenosyl-L-methionine contacts are provided by residues Leu76, Gly103, and 122–127 (LSPLTL).

This sequence belongs to the RNA methyltransferase RlmH family. As to quaternary structure, homodimer.

It is found in the cytoplasm. The enzyme catalyses pseudouridine(1915) in 23S rRNA + S-adenosyl-L-methionine = N(3)-methylpseudouridine(1915) in 23S rRNA + S-adenosyl-L-homocysteine + H(+). In terms of biological role, specifically methylates the pseudouridine at position 1915 (m3Psi1915) in 23S rRNA. The chain is Ribosomal RNA large subunit methyltransferase H from Wolinella succinogenes (strain ATCC 29543 / DSM 1740 / CCUG 13145 / JCM 31913 / LMG 7466 / NCTC 11488 / FDC 602W) (Vibrio succinogenes).